Here is a 730-residue protein sequence, read N- to C-terminus: Replication restart protein PriA (730 aa).

A Helicase ATP-binding domain is found at 212 to 378 (LLFHSGFNVW…QNGKYQHLVL (167 aa)). ATP is bound at residue 225 to 232 (GVTGSGKT). The DEAH box signature appears at 321 to 324 (DEEH). Residues Cys-437, Cys-440, Cys-446, Cys-449, Cys-464, Cys-467, Cys-477, and Cys-480 each coordinate Zn(2+). In terms of domain architecture, Helicase C-terminal spans 472–640 (TIPRQCGDCG…LPPFTFQALI (169 aa)).

This sequence belongs to the helicase family. PriA subfamily. In terms of assembly, component of the replication restart primosome. The cofactor is Zn(2+).

It carries out the reaction Couples ATP hydrolysis with the unwinding of duplex DNA by translocating in the 3'-5' direction.. The catalysed reaction is ATP + H2O = ADP + phosphate + H(+). In terms of biological role, initiates the restart of stalled replication forks, which reloads the replicative helicase on sites other than the origin of replication. Recognizes and binds to abandoned replication forks and remodels them to uncover a helicase loading site. Promotes assembly of the primosome at these replication forks. The polypeptide is Replication restart protein PriA (Haemophilus influenzae (strain ATCC 51907 / DSM 11121 / KW20 / Rd)).